Consider the following 120-residue polypeptide: Large ribosomal subunit protein bL19 (120 aa).

This sequence belongs to the bacterial ribosomal protein bL19 family.

Its function is as follows. This protein is located at the 30S-50S ribosomal subunit interface and may play a role in the structure and function of the aminoacyl-tRNA binding site. In Chlorobium limicola (strain DSM 245 / NBRC 103803 / 6330), this protein is Large ribosomal subunit protein bL19.